The sequence spans 94 residues: Aspartyl/glutamyl-tRNA(Asn/Gln) amidotransferase subunit C (94 aa).

The interval 72–94 (PREKALQGAPEVSEGQFKVPRVV) is disordered.

The protein belongs to the GatC family. Heterotrimer of A, B and C subunits.

It carries out the reaction L-glutamyl-tRNA(Gln) + L-glutamine + ATP + H2O = L-glutaminyl-tRNA(Gln) + L-glutamate + ADP + phosphate + H(+). The enzyme catalyses L-aspartyl-tRNA(Asn) + L-glutamine + ATP + H2O = L-asparaginyl-tRNA(Asn) + L-glutamate + ADP + phosphate + 2 H(+). Allows the formation of correctly charged Asn-tRNA(Asn) or Gln-tRNA(Gln) through the transamidation of misacylated Asp-tRNA(Asn) or Glu-tRNA(Gln) in organisms which lack either or both of asparaginyl-tRNA or glutaminyl-tRNA synthetases. The reaction takes place in the presence of glutamine and ATP through an activated phospho-Asp-tRNA(Asn) or phospho-Glu-tRNA(Gln). This is Aspartyl/glutamyl-tRNA(Asn/Gln) amidotransferase subunit C from Moorella thermoacetica (strain ATCC 39073 / JCM 9320).